A 374-amino-acid polypeptide reads, in one-letter code: MQECGATAAGRRAFDSICPNRMLDPRGRPISKPGKPERKFAPPRKFFPGSSGCNRVSVYEDPPDAETPALPALTTIDLQDLADCSSFLGSDPPPGGDSAASQSHSLQTAADFDLQDFRDTVDNLIADSSSLMSPSLAGGDLPFSPSDVLPFGPCLSPPLSPPEVPPPEQYWKEVADQNQRALGDALIENNQLHATLTQKQEEIASLKERNLQLKELASRTRHLASVLDKLMITHSRDPGAAAEPFLLKATAKRSLEELFSAAGQDCAEVDAVLREISERCDEALQSRDPKRLRLQPEPQSLDRRPGNLHGAFPGLRTDCSLSTLNLSHSELEEGGSFSTPIRSHSTIRTLAFPQGNAFTIRTANGGYKFRWIPS.

2 disordered regions span residues 18 to 72 (CPNR…ALPA) and 84 to 105 (CSSFLGSDPPPGGDSAASQSHS). A coiled-coil region spans residues 168-216 (EQYWKEVADQNQRALGDALIENNQLHATLTQKQEEIASLKERNLQLKEL). Positions 284 to 306 (LQSRDPKRLRLQPEPQSLDRRPG) are disordered.

This sequence belongs to the geminin family. As to quaternary structure, heterodimer (via coiled-coil domain) with GMNN (via coiled-coil domain); targets GMNN to the nucleus. Can form homodimers (in vitro, via coiled-coil domain), but these are much less stable than the heterodimer formed with GMNN.

It localises to the nucleus. In terms of biological role, transcription regulator specifically required for multiciliate cell differentiation. Acts in a multiprotein complex containing E2F4 and E2F5 that binds and activates genes required for centriole biogenesis. Required for the deuterosome-mediated acentriolar pathway. Plays a role in mitotic cell cycle progression by promoting cell cycle exit. Modulates GMNN activity by reducing its affinity for CDT1. The protein is Multicilin (MCIDAS) of Bos taurus (Bovine).